The chain runs to 444 residues: Type VII secretion system protein EssB (444 aa).

Topologically, residues M1–W229 are cytoplasmic. A helical membrane pass occupies residues V230–F250. The Extracellular segment spans residues S251–K444. The tract at residues K366–K444 is disordered. Residues S372 to K444 show a composition bias toward basic and acidic residues. Residues L387–K443 adopt a coiled-coil conformation.

The protein belongs to the EssB family.

The protein localises to the cell membrane. Its function is as follows. Component of the type VII secretion system (Ess). Required for the secretion of EsxA. In Staphylococcus aureus (strain MRSA252), this protein is Type VII secretion system protein EssB.